Consider the following 278-residue polypeptide: uncharacterized protein (278 aa).

The segment covering 1–11 (MMIHIHQDKKM) has biased composition (basic and acidic residues). Disordered regions lie at residues 1-107 (MMIH…RYFK) and 206-278 (KVSA…KASR). The span at 62–94 (KQSGGKNAKSGSKSAKSGSKSAKSGSKTSKTQS) shows a compositional bias: low complexity. A compositionally biased stretch (basic and acidic residues) spans 97 to 107 (KGDESRDRYFK). A compositionally biased stretch (polar residues) spans 249–260 (SAKNAKSTGNKK). Low complexity predominate over residues 264–278 (KSAGAKKAPAAKASR).

This is an uncharacterized protein from Acanthamoeba polyphaga mimivirus (APMV).